A 345-amino-acid polypeptide reads, in one-letter code: Probable deoxyhypusine synthase 2 (345 aa).

The active-site Nucleophile is lysine 292.

It belongs to the deoxyhypusine synthase family. NAD(+) is required as a cofactor.

It catalyses the reaction [eIF5A protein]-L-lysine + spermidine = [eIF5A protein]-deoxyhypusine + propane-1,3-diamine. It participates in protein modification; eIF5A hypusination. Catalyzes the NAD-dependent oxidative cleavage of spermidine and the subsequent transfer of the butylamine moiety of spermidine to the epsilon-amino group of a specific lysine residue of the eIF-5A precursor protein to form the intermediate deoxyhypusine residue. This chain is Probable deoxyhypusine synthase 2 (dys2), found in Methanosarcina acetivorans (strain ATCC 35395 / DSM 2834 / JCM 12185 / C2A).